The primary structure comprises 182 residues: Pyruvoyl-dependent arginine decarboxylase (182 aa).

A Pyruvic acid (Ser) modification is found at S44.

It belongs to the PdaD family. It depends on pyruvate as a cofactor.

It catalyses the reaction L-arginine + H(+) = agmatine + CO2. The sequence is that of Pyruvoyl-dependent arginine decarboxylase from Thermoplasma volcanium (strain ATCC 51530 / DSM 4299 / JCM 9571 / NBRC 15438 / GSS1).